The primary structure comprises 308 residues: Apolipoprotein E (308 aa).

Positions 1–18 (MKFLWAALVVTLLAGCRA) are cleaved as a signal peptide. Tandem repeats lie at residues 75–96 (LLIE…KQVG), 97–118 (PIAQ…ARLE), 119–140 (SDME…AALG), 141–162 (QNTD…KRLL), 163–184 (RDAE…EAAE), 185–206 (RGVS…LQAI), 207–224 (PPSQ…QKVR), and 225–246 (GRLE…DQME). The tract at residues 75-246 (LLIEETMKEV…RLDDMRDQME (172 aa)) is 8 X 22 AA approximate tandem repeats. Positions 153–163 (HLRKLRKRLLR) are LDL and other lipoprotein receptors binding. 157–160 (LRKR) serves as a coordination point for heparin. Positions 205–281 (AIPPSQQLRE…SWFEPLVQDM (77 aa)) are lipid-binding and lipoprotein association. Residue 220 to 227 (GQKVRGRL) participates in heparin binding. Residues 257–308 (SQVRLQAEAFQTRLKSWFEPLVQDMQRQWASLVEKVQSTLGISPSTKPSKTK) form a homooligomerization region. The tract at residues 269-281 (RLKSWFEPLVQDM) is specificity for association with VLDL.

It belongs to the apolipoprotein A1/A4/E family. Homotetramer. May interact with ABCA1; functionally associated with ABCA1 in the biogenesis of HDLs. May interact with APP/A4 amyloid-beta peptide; the interaction is extremely stable in vitro but its physiological significance is unclear. May interact with MAPT. May interact with MAP2. In the cerebrospinal fluid, interacts with secreted SORL1. Interacts with PMEL; this allows the loading of PMEL luminal fragment on ILVs to induce fibril nucleation. Post-translationally, APOE exists as multiple glycosylated and sialylated glycoforms within cells and in plasma. The extent of glycosylation and sialylation are tissue and context specific. Glycated in plasma VLDL. In terms of processing, phosphorylated by FAM20C in the extracellular medium.

Its subcellular location is the secreted. The protein localises to the extracellular space. The protein resides in the extracellular matrix. It is found in the extracellular vesicle. It localises to the endosome. Its subcellular location is the multivesicular body. Its function is as follows. APOE is an apolipoprotein, a protein associating with lipid particles, that mainly functions in lipoprotein-mediated lipid transport between organs via the plasma and interstitial fluids. APOE is a core component of plasma lipoproteins and is involved in their production, conversion and clearance. Apolipoproteins are amphipathic molecules that interact both with lipids of the lipoprotein particle core and the aqueous environment of the plasma. As such, APOE associates with chylomicrons, chylomicron remnants, very low density lipoproteins (VLDL) and intermediate density lipoproteins (IDL) but shows a preferential binding to high-density lipoproteins (HDL). It also binds a wide range of cellular receptors including the LDL receptor/LDLR and the very low-density lipoprotein receptor/VLDLR that mediate the cellular uptake of the APOE-containing lipoprotein particles. Finally, APOE also has a heparin-binding activity and binds heparan-sulfate proteoglycans on the surface of cells, a property that supports the capture and the receptor-mediated uptake of APOE-containing lipoproteins by cells. This Pteropus pselaphon (Bonin flying fox) protein is Apolipoprotein E (APOE).